The chain runs to 497 residues: Probable cytosol aminopeptidase (497 aa).

Mn(2+) is bound by residues Lys-263 and Asp-268. The active site involves Lys-275. Asp-286, Asp-345, and Glu-347 together coordinate Mn(2+). Arg-349 is a catalytic residue.

It belongs to the peptidase M17 family. Mn(2+) is required as a cofactor.

The protein resides in the cytoplasm. The enzyme catalyses Release of an N-terminal amino acid, Xaa-|-Yaa-, in which Xaa is preferably Leu, but may be other amino acids including Pro although not Arg or Lys, and Yaa may be Pro. Amino acid amides and methyl esters are also readily hydrolyzed, but rates on arylamides are exceedingly low.. It carries out the reaction Release of an N-terminal amino acid, preferentially leucine, but not glutamic or aspartic acids.. Its function is as follows. Presumably involved in the processing and regular turnover of intracellular proteins. Catalyzes the removal of unsubstituted N-terminal amino acids from various peptides. The chain is Probable cytosol aminopeptidase from Agrobacterium fabrum (strain C58 / ATCC 33970) (Agrobacterium tumefaciens (strain C58)).